The chain runs to 346 residues: Probable 3-hydroxyacyl-CoA dehydrogenase (346 aa).

The interval 322–346 (RANLSPSATPCTPWKARKATSCAPP) is disordered.

Belongs to the 3-hydroxyacyl-CoA dehydrogenase family.

It carries out the reaction a (3S)-3-hydroxyacyl-CoA + NAD(+) = a 3-oxoacyl-CoA + NADH + H(+). This chain is Probable 3-hydroxyacyl-CoA dehydrogenase, found in Deinococcus radiodurans (strain ATCC 13939 / DSM 20539 / JCM 16871 / CCUG 27074 / LMG 4051 / NBRC 15346 / NCIMB 9279 / VKM B-1422 / R1).